A 123-amino-acid polypeptide reads, in one-letter code: Iron-sulfur cluster insertion protein ErpA (123 aa).

Residues Cys-51, Cys-115, and Cys-117 each coordinate iron-sulfur cluster.

The protein belongs to the HesB/IscA family. As to quaternary structure, homodimer. Iron-sulfur cluster is required as a cofactor.

In terms of biological role, required for insertion of 4Fe-4S clusters for at least IspG. This Halorhodospira halophila (strain DSM 244 / SL1) (Ectothiorhodospira halophila (strain DSM 244 / SL1)) protein is Iron-sulfur cluster insertion protein ErpA.